A 618-amino-acid polypeptide reads, in one-letter code: Isocitrate dehydrogenase kinase/phosphatase (618 aa).

ATP is bound by residues 332–338 (APGIKGM) and K353. D388 is a catalytic residue.

The protein belongs to the AceK family.

The protein localises to the cytoplasm. It catalyses the reaction L-seryl-[isocitrate dehydrogenase] + ATP = O-phospho-L-seryl-[isocitrate dehydrogenase] + ADP + H(+). Functionally, bifunctional enzyme which can phosphorylate or dephosphorylate isocitrate dehydrogenase (IDH) on a specific serine residue. This is a regulatory mechanism which enables bacteria to bypass the Krebs cycle via the glyoxylate shunt in response to the source of carbon. When bacteria are grown on glucose, IDH is fully active and unphosphorylated, but when grown on acetate or ethanol, the activity of IDH declines drastically concomitant with its phosphorylation. In Methylibium petroleiphilum (strain ATCC BAA-1232 / LMG 22953 / PM1), this protein is Isocitrate dehydrogenase kinase/phosphatase.